Consider the following 503-residue polypeptide: GMP synthase [glutamine-hydrolyzing] (503 aa).

Residues 1–178 (MREANVYSEI…LHRAAGIPAD (178 aa)) form the Glutamine amidotransferase type-1 domain. The active-site Nucleophile is the C60. Catalysis depends on residues H152 and E154. In terms of domain architecture, GMPS ATP-PPase spans 179 to 377 (WNSGNVIADQ…LGLPEVIVGR (199 aa)). 206 to 212 (SGGVDSA) is an ATP binding site.

Homodimer.

The catalysed reaction is XMP + L-glutamine + ATP + H2O = GMP + L-glutamate + AMP + diphosphate + 2 H(+). It participates in purine metabolism; GMP biosynthesis; GMP from XMP (L-Gln route): step 1/1. In terms of biological role, catalyzes the synthesis of GMP from XMP. The protein is GMP synthase [glutamine-hydrolyzing] of Leifsonia xyli subsp. xyli (strain CTCB07).